Reading from the N-terminus, the 105-residue chain is U7-hexatoxin-Hi1a (105 aa).

The signal sequence occupies residues 1-23; sequence MKTILLFLGVCAVGASMMTGGWT.

This sequence belongs to the cystatin family. Post-translationally, contains 2 disulfide bonds. In terms of tissue distribution, expressed by the venom gland.

It is found in the secreted. Functionally, inhibits various C1 cysteine proteases. This protein has no toxic activity and its function in the venom is unknown. It may play a role as a housekeeping or regulatory protein. This is U7-hexatoxin-Hi1a from Hadronyche infensa (Fraser island funnel-web spider).